Here is a 251-residue protein sequence, read N- to C-terminus: Ribonuclease PH (251 aa).

Phosphate-binding positions include Arg90 and 128 to 130 (GTR).

This sequence belongs to the RNase PH family. In terms of assembly, homohexameric ring arranged as a trimer of dimers.

The enzyme catalyses tRNA(n+1) + phosphate = tRNA(n) + a ribonucleoside 5'-diphosphate. Functionally, phosphorolytic 3'-5' exoribonuclease that plays an important role in tRNA 3'-end maturation. Removes nucleotide residues following the 3'-CCA terminus of tRNAs; can also add nucleotides to the ends of RNA molecules by using nucleoside diphosphates as substrates, but this may not be physiologically important. Probably plays a role in initiation of 16S rRNA degradation (leading to ribosome degradation) during starvation. The chain is Ribonuclease PH from Leifsonia xyli subsp. xyli (strain CTCB07).